The chain runs to 37 residues: Cytochrome b6-f complex subunit 5 (37 aa).

The helical transmembrane segment at 5–25 (LLFGIVLGLIPITLAGLFVTA) threads the bilayer.

It belongs to the PetG family. In terms of assembly, the 4 large subunits of the cytochrome b6-f complex are cytochrome b6, subunit IV (17 kDa polypeptide, PetD), cytochrome f and the Rieske protein, while the 4 small subunits are PetG, PetL, PetM and PetN. The complex functions as a dimer.

It localises to the plastid. The protein resides in the chloroplast thylakoid membrane. Functionally, component of the cytochrome b6-f complex, which mediates electron transfer between photosystem II (PSII) and photosystem I (PSI), cyclic electron flow around PSI, and state transitions. PetG is required for either the stability or assembly of the cytochrome b6-f complex. This Lemna minor (Common duckweed) protein is Cytochrome b6-f complex subunit 5.